The chain runs to 229 residues: 7-cyano-7-deazaguanine synthase (229 aa).

15 to 25 (LSGGLDSATVV) provides a ligand contact to ATP. Zn(2+)-binding residues include Cys194, Cys204, Cys207, and Cys210.

The protein belongs to the QueC family. Zn(2+) is required as a cofactor.

It carries out the reaction 7-carboxy-7-deazaguanine + NH4(+) + ATP = 7-cyano-7-deazaguanine + ADP + phosphate + H2O + H(+). It functions in the pathway purine metabolism; 7-cyano-7-deazaguanine biosynthesis. Catalyzes the ATP-dependent conversion of 7-carboxy-7-deazaguanine (CDG) to 7-cyano-7-deazaguanine (preQ(0)). This chain is 7-cyano-7-deazaguanine synthase, found in Pseudomonas syringae pv. syringae (strain B728a).